Reading from the N-terminus, the 427-residue chain is MRIALIDGEHYPDVNRWALEKLNVECAVFIGGMEKIGSIEDVERALNVKLYHDKDPFKALEKALEENDVEEVIDLSDEPVMTPELRFRIASYLLKRGIAYKGADFEFRPKEWIKLEVPSINIIGTGKRVGKTAIGGFVGRTLKERYRIVIVTMGRGGPEKPEIIRGDKITITPEFLVKIAEQGRHAASDHFEDALTAGVPTIGCRRCGGGLAGFTFLDVVKEGIEVAKTLKPELIVLEGSGASFANVLSDGFITVVSALQGERIKTYMYPLRISLADIVVVTMVEEVSEGEKIKRIIKEINPDADVHLTRFAPRLIGNVEGKAIVLTTSQESAKKMAKELERKGIEIAGYSGNLANRGRLREEMNRFNYDTVIVELKAGAVDVAIREALSNGKKVVFLDNEPVNVDGKNLKSAIKKLAERILHDKGG.

Belongs to the cyclic 2,3-diphosphoglycerate synthetase family.

The protein localises to the cytoplasm. The catalysed reaction is (2R)-2,3-bisphosphoglycerate + ATP + H(+) = cyclic (2R)-2,3-bisphosphoglycerate + ADP + phosphate. Its function is as follows. Catalyzes the formation of cyclic 2,3-diphosphoglycerate (cDPG) by formation of an intramolecular phosphoanhydride bond at the expense of ATP. The sequence is that of Cyclic 2,3-diphosphoglycerate synthetase from Pyrococcus abyssi (strain GE5 / Orsay).